We begin with the raw amino-acid sequence, 405 residues long: 4-hydroxy-3-methylbut-2-enyl diphosphate reductase (405 aa).

C66 provides a ligand contact to [4Fe-4S] cluster. H96 contributes to the (2E)-4-hydroxy-3-methylbut-2-enyl diphosphate binding site. Dimethylallyl diphosphate is bound at residue H96. H96 contacts isopentenyl diphosphate. C158 contributes to the [4Fe-4S] cluster binding site. (2E)-4-hydroxy-3-methylbut-2-enyl diphosphate is bound at residue H186. H186 serves as a coordination point for dimethylallyl diphosphate. H186 serves as a coordination point for isopentenyl diphosphate. E188 acts as the Proton donor in catalysis. T251 contacts (2E)-4-hydroxy-3-methylbut-2-enyl diphosphate. A [4Fe-4S] cluster-binding site is contributed by C289. (2E)-4-hydroxy-3-methylbut-2-enyl diphosphate is bound by residues S318, S319, N320, and S380. S318, S319, N320, and S380 together coordinate dimethylallyl diphosphate. The isopentenyl diphosphate site is built by S318, S319, N320, and S380.

This sequence belongs to the IspH family. It depends on [4Fe-4S] cluster as a cofactor.

The enzyme catalyses isopentenyl diphosphate + 2 oxidized [2Fe-2S]-[ferredoxin] + H2O = (2E)-4-hydroxy-3-methylbut-2-enyl diphosphate + 2 reduced [2Fe-2S]-[ferredoxin] + 2 H(+). It carries out the reaction dimethylallyl diphosphate + 2 oxidized [2Fe-2S]-[ferredoxin] + H2O = (2E)-4-hydroxy-3-methylbut-2-enyl diphosphate + 2 reduced [2Fe-2S]-[ferredoxin] + 2 H(+). Its pathway is isoprenoid biosynthesis; dimethylallyl diphosphate biosynthesis; dimethylallyl diphosphate from (2E)-4-hydroxy-3-methylbutenyl diphosphate: step 1/1. It participates in isoprenoid biosynthesis; isopentenyl diphosphate biosynthesis via DXP pathway; isopentenyl diphosphate from 1-deoxy-D-xylulose 5-phosphate: step 6/6. In terms of biological role, catalyzes the conversion of 1-hydroxy-2-methyl-2-(E)-butenyl 4-diphosphate (HMBPP) into a mixture of isopentenyl diphosphate (IPP) and dimethylallyl diphosphate (DMAPP). Acts in the terminal step of the DOXP/MEP pathway for isoprenoid precursor biosynthesis. The polypeptide is 4-hydroxy-3-methylbut-2-enyl diphosphate reductase (Cyanothece sp. (strain PCC 7425 / ATCC 29141)).